The sequence spans 806 residues: Acetyl-CoA decarbonylase/synthase complex subunit alpha 1 (806 aa).

[4Fe-4S] cluster-binding residues include C73, C76, C77, C79, C84, and C94. H117 is a binding site for CO. Residues H250, C278, and C323 each coordinate [Ni-4Fe-4S] cluster. 2 4Fe-4S ferredoxin-type domains span residues 407–436 and 446–475; these read DEEF…IPEA and SYLD…LNII. 8 residues coordinate [4Fe-4S] cluster: C417, C420, C423, C427, C455, C458, C461, and C465. [Ni-4Fe-4S] cluster contacts are provided by C523, C552, and C587.

Belongs to the Ni-containing carbon monoxide dehydrogenase family. In terms of assembly, heterotetramer of two alpha and two epsilon subunits. The ACDS complex is made up of alpha, epsilon, beta, gamma and delta subunits with a probable stoichiometry of (alpha(2)epsilon(2))(4)-beta(8)-(gamma(1)delta(1))(8). The cofactor is [4Fe-4S] cluster. Requires [Ni-4Fe-4S] cluster as cofactor.

The catalysed reaction is CO + 2 oxidized [2Fe-2S]-[ferredoxin] + H2O = 2 reduced [2Fe-2S]-[ferredoxin] + CO2 + 2 H(+). Its pathway is one-carbon metabolism; methanogenesis from acetate. Carbon monoxide dehydrogenase activity is inhibited by KCN and is rapidly inactivated by O(2). In terms of biological role, part of the ACDS complex that catalyzes the reversible cleavage of acetyl-CoA, allowing growth on acetate as sole source of carbon and energy. The alpha-epsilon subcomponent functions as a carbon monoxide dehydrogenase. In Methanosarcina barkeri (strain Fusaro / DSM 804), this protein is Acetyl-CoA decarbonylase/synthase complex subunit alpha 1.